An 82-amino-acid polypeptide reads, in one-letter code: UPF0180 protein BH2667 (82 aa).

The protein belongs to the UPF0180 family.

This chain is UPF0180 protein BH2667, found in Halalkalibacterium halodurans (strain ATCC BAA-125 / DSM 18197 / FERM 7344 / JCM 9153 / C-125) (Bacillus halodurans).